A 258-amino-acid polypeptide reads, in one-letter code: Polysialic acid transport protein KpsM (258 aa).

Residues 1–30 (MARSGFEVQKVTVEALFLREIRTRFGKFRL) lie on the Cytoplasmic side of the membrane. An ABC transmembrane type-2 domain is found at 30-251 (LGYLWAILEP…FIGLALYRTR (222 aa)). The chain crosses the membrane as a helical span at residues 31-54 (GYLWAILEPSAHLLILLGILGYVM). At 55–61 (HRTMPDI) the chain is on the periplasmic side. Residues 62–81 (SFPVFLLNGLIPFFIFSSIS) traverse the membrane as a helical segment. Topologically, residues 82–108 (KRSIGAIEANQGLFNYRPVKPIDTIIA) are cytoplasmic. A helical membrane pass occupies residues 109–132 (RALLETLIYVAVYILLMLIVWMTG). Over 133-143 (EYFEITNFLQL) the chain is Periplasmic. Residues 144 to 165 (VLTWSLLIILSCGVGLIFMVVG) traverse the membrane as a helical segment. Residues 166-174 (KTFPEMQKV) lie on the Cytoplasmic side of the membrane. The chain crosses the membrane as a helical span at residues 175–195 (LPILLKPLYFISCIMFPLHSI). The Periplasmic portion of the chain corresponds to 196-226 (PKQYWSYLLWNPLVHVVELSREAVMPGYISE). Residues 227–247 (GVSLNYLAMFTLVTLFIGLAL) form a helical membrane-spanning segment. At 248-258 (YRTREEAMLTS) the chain is on the cytoplasmic side.

It belongs to the ABC-2 integral membrane protein family.

Its subcellular location is the cell inner membrane. KpsM and KpsT constitute a system for the transport of polysialic acid across the cytoplasmic membrane. This chain is Polysialic acid transport protein KpsM (kpsM), found in Escherichia coli.